A 290-amino-acid polypeptide reads, in one-letter code: ATP synthase gamma chain (290 aa).

The protein belongs to the ATPase gamma chain family. F-type ATPases have 2 components, CF(1) - the catalytic core - and CF(0) - the membrane proton channel. CF(1) has five subunits: alpha(3), beta(3), gamma(1), delta(1), epsilon(1). CF(0) has three main subunits: a, b and c.

The protein localises to the cell inner membrane. Produces ATP from ADP in the presence of a proton gradient across the membrane. The gamma chain is believed to be important in regulating ATPase activity and the flow of protons through the CF(0) complex. This is ATP synthase gamma chain from Anaeromyxobacter sp. (strain K).